Reading from the N-terminus, the 284-residue chain is Bifunctional protein FolD (284 aa).

NADP(+)-binding positions include G166–S168 and I232.

This sequence belongs to the tetrahydrofolate dehydrogenase/cyclohydrolase family. Homodimer.

It catalyses the reaction (6R)-5,10-methylene-5,6,7,8-tetrahydrofolate + NADP(+) = (6R)-5,10-methenyltetrahydrofolate + NADPH. It carries out the reaction (6R)-5,10-methenyltetrahydrofolate + H2O = (6R)-10-formyltetrahydrofolate + H(+). The protein operates within one-carbon metabolism; tetrahydrofolate interconversion. In terms of biological role, catalyzes the oxidation of 5,10-methylenetetrahydrofolate to 5,10-methenyltetrahydrofolate and then the hydrolysis of 5,10-methenyltetrahydrofolate to 10-formyltetrahydrofolate. The chain is Bifunctional protein FolD from Shewanella pealeana (strain ATCC 700345 / ANG-SQ1).